The sequence spans 124 residues: Large ribosomal subunit protein bL19 (124 aa).

The protein belongs to the bacterial ribosomal protein bL19 family.

Functionally, this protein is located at the 30S-50S ribosomal subunit interface and may play a role in the structure and function of the aminoacyl-tRNA binding site. The sequence is that of Large ribosomal subunit protein bL19 from Orientia tsutsugamushi (strain Ikeda) (Rickettsia tsutsugamushi).